A 358-amino-acid chain; its full sequence is Biotin synthase (358 aa).

A Radical SAM core domain is found at 47 to 306; it reads KNNSKIKLCA…ALYKIIMPYA (260 aa). 3 residues coordinate [4Fe-4S] cluster: Cys-65, Cys-69, and Cys-72. [2Fe-2S] cluster contacts are provided by Ser-142, Cys-174, Cys-233, and Arg-309.

It belongs to the radical SAM superfamily. Biotin synthase family. As to quaternary structure, homodimer. Requires [4Fe-4S] cluster as cofactor. The cofactor is [2Fe-2S] cluster.

The catalysed reaction is (4R,5S)-dethiobiotin + (sulfur carrier)-SH + 2 reduced [2Fe-2S]-[ferredoxin] + 2 S-adenosyl-L-methionine = (sulfur carrier)-H + biotin + 2 5'-deoxyadenosine + 2 L-methionine + 2 oxidized [2Fe-2S]-[ferredoxin]. The protein operates within cofactor biosynthesis; biotin biosynthesis; biotin from 7,8-diaminononanoate: step 2/2. Functionally, catalyzes the conversion of dethiobiotin (DTB) to biotin by the insertion of a sulfur atom into dethiobiotin via a radical-based mechanism. The chain is Biotin synthase from Methanocaldococcus jannaschii (strain ATCC 43067 / DSM 2661 / JAL-1 / JCM 10045 / NBRC 100440) (Methanococcus jannaschii).